A 412-amino-acid polypeptide reads, in one-letter code: Serine hydroxymethyltransferase (412 aa).

(6S)-5,6,7,8-tetrahydrofolate is bound by residues L117 and 121 to 123; that span reads GHL. An N6-(pyridoxal phosphate)lysine modification is found at K226. 349–351 contacts (6S)-5,6,7,8-tetrahydrofolate; it reads SPF.

Belongs to the SHMT family. As to quaternary structure, homodimer. It depends on pyridoxal 5'-phosphate as a cofactor.

Its subcellular location is the cytoplasm. The catalysed reaction is (6R)-5,10-methylene-5,6,7,8-tetrahydrofolate + glycine + H2O = (6S)-5,6,7,8-tetrahydrofolate + L-serine. Its pathway is one-carbon metabolism; tetrahydrofolate interconversion. It functions in the pathway amino-acid biosynthesis; glycine biosynthesis; glycine from L-serine: step 1/1. Catalyzes the reversible interconversion of serine and glycine with tetrahydrofolate (THF) serving as the one-carbon carrier. This reaction serves as the major source of one-carbon groups required for the biosynthesis of purines, thymidylate, methionine, and other important biomolecules. Also exhibits THF-independent aldolase activity toward beta-hydroxyamino acids, producing glycine and aldehydes, via a retro-aldol mechanism. The sequence is that of Serine hydroxymethyltransferase from Oleidesulfovibrio alaskensis (strain ATCC BAA-1058 / DSM 17464 / G20) (Desulfovibrio alaskensis).